A 479-amino-acid polypeptide reads, in one-letter code: Altronate oxidoreductase (479 aa).

18-29 (IIQFGEGNFLRA) serves as a coordination point for NAD(+).

The protein belongs to the mannitol dehydrogenase family. UxaB subfamily.

It carries out the reaction D-altronate + NAD(+) = keto-D-tagaturonate + NADH + H(+). It functions in the pathway carbohydrate metabolism; pentose and glucuronate interconversion. In Bacteroides thetaiotaomicron (strain ATCC 29148 / DSM 2079 / JCM 5827 / CCUG 10774 / NCTC 10582 / VPI-5482 / E50), this protein is Altronate oxidoreductase.